The primary structure comprises 631 residues: Golgin subfamily A member 8A (631 aa).

Positions 1 to 20 (MLPVDGEERKSEGSDTEGDR) are enriched in basic and acidic residues. Disordered stretches follow at residues 1–103 (MLPV…QEQA), 127–154 (KKQV…LEGQ), 426–447 (TSAE…ESSG), and 488–520 (PGDS…GAAG). Positions 78–92 (SLYLSPKSSSASSSL) are enriched in low complexity. The segment covering 93–103 (HARQSPCQEQA) has biased composition (polar residues). Residues 110-468 (SIKISRLNDT…REHVEKLELG (359 aa)) are a coiled coil. Residues 128-152 (KQVEHQLEEEKKANNEKQKAERELE) are compositionally biased toward basic and acidic residues. Over residues 497-510 (PGGGHHQAGPGQGG) the composition is skewed to gly residues. The segment at 519-631 (AGDGVAACGS…CWAWLPRRRR (113 aa)) is golgi-targeting domain.

Belongs to the GOLGA8 family.

It is found in the golgi apparatus. It localises to the golgi stack membrane. In terms of biological role, may be involved in maintaining Golgi structure. The polypeptide is Golgin subfamily A member 8A (GOLGA8A) (Homo sapiens (Human)).